The chain runs to 609 residues: Spore coat protein homolog 1 (609 aa).

Residues 1–17 (MKSLLFVVFIFLTTTYA) form the signal peptide. 3 N-linked (GlcNAc...) asparagine glycosylation sites follow: Asn82, Asn397, and Asn440. Positions 527 to 547 (TVTQVPEAPGTDGTPSESTAW) are disordered. Residue Ser584 is the site of GPI-anchor amidated serine attachment. Residues 585–609 (SSSIKRTPCILPLVILASTLFASFF) constitute a propeptide, removed in mature form.

It is found in the cell membrane. Its function is as follows. May play a role in cell adhesion. The chain is Spore coat protein homolog 1 from Rhizopus delemar (strain RA 99-880 / ATCC MYA-4621 / FGSC 9543 / NRRL 43880) (Mucormycosis agent).